A 194-amino-acid chain; its full sequence is Large ribosomal subunit protein eL15 (194 aa).

Residues 164–194 form a disordered region; sequence SAGKKGRGLRNKGIGAEKVRPSIRAHGRRGK. Over residues 184–194 the composition is skewed to basic residues; that stretch reads PSIRAHGRRGK.

This sequence belongs to the eukaryotic ribosomal protein eL15 family.

In Methanocaldococcus jannaschii (strain ATCC 43067 / DSM 2661 / JAL-1 / JCM 10045 / NBRC 100440) (Methanococcus jannaschii), this protein is Large ribosomal subunit protein eL15 (rpl15e).